The sequence spans 110 residues: Body wall hemoglobin (110 aa).

The region spanning 2–110 (VNWAAVVDAF…GAVDAIISHF (109 aa)) is the Globin domain. A heme-binding site is contributed by H70.

This sequence belongs to the globin family. As to quaternary structure, homotetramer.

In Cerebratulus lacteus (Milky ribbon worm), this protein is Body wall hemoglobin.